The primary structure comprises 423 residues: Phaseolin (423 aa).

Residues 1 to 21 form the signal peptide; sequence RRVPLLLLGILFLASLSASFA. Residue Asn-28 is glycosylated (N-linked (GlcNAc...) asparagine). Cupin type-1 domains follow at residues 35 to 193 and 228 to 383; these read FYFS…EKIN and KSLD…EDVQ. Asn-243, Asn-332, Asn-390, and Asn-396 each carry an N-linked (GlcNAc...) asparagine glycan. The segment at 397–423 is disordered; that stretch reads GSYHKNAHPHEQEQQKQQKGRKGAFVY. Positions 414-423 are enriched in basic residues; sequence QKGRKGAFVY.

The protein belongs to the 7S seed storage protein family. Homotrimer.

It localises to the vacuole. The protein localises to the aleurone grain. Functionally, major seed storage protein. This is Phaseolin (PHS) from Phaseolus lunatus (Lima bean).